A 335-amino-acid polypeptide reads, in one-letter code: Glycerol-3-phosphate dehydrogenase [NAD(P)+] (335 aa).

Residues Ser-15, Tyr-16, Arg-36, and Lys-110 each coordinate NADPH. Positions 110, 139, and 141 each coordinate sn-glycerol 3-phosphate. Ala-143 is an NADPH binding site. Lys-195, Asp-248, Ser-258, Arg-259, and Asn-260 together coordinate sn-glycerol 3-phosphate. Lys-195 (proton acceptor) is an active-site residue. Arg-259 serves as a coordination point for NADPH. NADPH-binding residues include Val-283 and Glu-285.

Belongs to the NAD-dependent glycerol-3-phosphate dehydrogenase family.

The protein resides in the cytoplasm. It catalyses the reaction sn-glycerol 3-phosphate + NAD(+) = dihydroxyacetone phosphate + NADH + H(+). It carries out the reaction sn-glycerol 3-phosphate + NADP(+) = dihydroxyacetone phosphate + NADPH + H(+). Its pathway is membrane lipid metabolism; glycerophospholipid metabolism. In terms of biological role, catalyzes the reduction of the glycolytic intermediate dihydroxyacetone phosphate (DHAP) to sn-glycerol 3-phosphate (G3P), the key precursor for phospholipid synthesis. This Pseudoalteromonas translucida (strain TAC 125) protein is Glycerol-3-phosphate dehydrogenase [NAD(P)+].